Here is a 926-residue protein sequence, read N- to C-terminus: Thyroid peroxidase (926 aa).

The signal sequence occupies residues Met-1 to Ala-14. The Extracellular portion of the chain corresponds to Phe-19–Arg-844. Asn-129 is a glycosylation site (N-linked (GlcNAc...) asparagine). Cys-142 and Cys-158 are disulfide-bonded. Asp-238 contacts heme b. The active-site Proton acceptor is the His-239. Asp-240 contacts Ca(2+). 2 disulfides stabilise this stretch: Cys-259/Cys-269 and Cys-263/Cys-286. N-linked (GlcNAc...) asparagine glycosylation is found at Asn-277 and Asn-307. Ca(2+) contacts are provided by Thr-321, Phe-323, Asp-325, and Ser-327. Asn-342 carries N-linked (GlcNAc...) asparagine glycosylation. 2 residues coordinate heme b: Glu-398 and His-493. 7 cysteine pairs are disulfide-bonded: Cys-596–Cys-653, Cys-694–Cys-719, Cys-740–Cys-780, Cys-766–Cys-792, Cys-798–Cys-812, Cys-806–Cys-821, and Cys-823–Cys-836. A Sushi domain is found at Asp-738 to Lys-793. In terms of domain architecture, EGF-like; calcium-binding spans Asp-794–Val-837. Residues Ala-845–Cys-869 form a helical membrane-spanning segment. At Arg-870–Glu-926 the chain is on the cytoplasmic side.

The protein belongs to the peroxidase family. XPO subfamily. Interacts with DUOX1, DUOX2 and CYBA. It depends on Ca(2+) as a cofactor. Heme b is required as a cofactor. Post-translationally, heme is covalently bound through a H(2)O(2)-dependent autocatalytic process. Heme insertion is important for the delivery of protein at the cell surface. Cleaved in its N-terminal part. In terms of processing, N-glycosylated; contains mannose and N-acetylglucosamine.

Its subcellular location is the membrane. It carries out the reaction 2 iodide + H2O2 + 2 H(+) = diiodine + 2 H2O. The catalysed reaction is [thyroglobulin]-L-tyrosine + iodide + H2O2 + H(+) = [thyroglobulin]-3-iodo-L-tyrosine + 2 H2O. It catalyses the reaction [thyroglobulin]-3-iodo-L-tyrosine + iodide + H2O2 + H(+) = [thyroglobulin]-3,5-diiodo-L-tyrosine + 2 H2O. The enzyme catalyses 2 [thyroglobulin]-3,5-diiodo-L-tyrosine + H2O2 = [thyroglobulin]-L-thyroxine + [thyroglobulin]-dehydroalanine + 2 H2O. It carries out the reaction [thyroglobulin]-3-iodo-L-tyrosine + [thyroglobulin]-3,5-diiodo-L-tyrosine + H2O2 = [thyroglobulin]-3,3',5-triiodo-L-thyronine + [thyroglobulin]-dehydroalanine + 2 H2O. It participates in hormone biosynthesis; thyroid hormone biosynthesis. Iodination and coupling of the hormonogenic tyrosines in thyroglobulin to yield the thyroid hormones T(3) and T(4). This Sus scrofa (Pig) protein is Thyroid peroxidase (TPO).